The following is a 261-amino-acid chain: Indole-3-glycerol phosphate synthase (261 aa).

It belongs to the TrpC family.

The enzyme catalyses 1-(2-carboxyphenylamino)-1-deoxy-D-ribulose 5-phosphate + H(+) = (1S,2R)-1-C-(indol-3-yl)glycerol 3-phosphate + CO2 + H2O. It functions in the pathway amino-acid biosynthesis; L-tryptophan biosynthesis; L-tryptophan from chorismate: step 4/5. The sequence is that of Indole-3-glycerol phosphate synthase from Burkholderia pseudomallei (strain 668).